A 243-amino-acid polypeptide reads, in one-letter code: Type III pantothenate kinase (243 aa).

7-14 lines the ATP pocket; it reads DLGNSRFK. Residues tyrosine 91 and 98–101 contribute to the substrate site; that span reads GVDR. Aspartate 100 functions as the Proton acceptor in the catalytic mechanism. An ATP-binding site is contributed by threonine 122. Threonine 172 is a substrate binding site.

Belongs to the type III pantothenate kinase family. As to quaternary structure, homodimer. Requires NH4(+) as cofactor. K(+) is required as a cofactor.

It localises to the cytoplasm. It catalyses the reaction (R)-pantothenate + ATP = (R)-4'-phosphopantothenate + ADP + H(+). The protein operates within cofactor biosynthesis; coenzyme A biosynthesis; CoA from (R)-pantothenate: step 1/5. In terms of biological role, catalyzes the phosphorylation of pantothenate (Pan), the first step in CoA biosynthesis. This chain is Type III pantothenate kinase, found in Stenotrophomonas maltophilia (strain R551-3).